Here is a 67-residue protein sequence, read N- to C-terminus: DNA-directed RNA polymerase subunit omega (67 aa).

Belongs to the RNA polymerase subunit omega family. As to quaternary structure, the RNAP catalytic core consists of 2 alpha, 1 beta, 1 beta' and 1 omega subunit. When a sigma factor is associated with the core the holoenzyme is formed, which can initiate transcription.

It catalyses the reaction RNA(n) + a ribonucleoside 5'-triphosphate = RNA(n+1) + diphosphate. Its function is as follows. Promotes RNA polymerase assembly. Latches the N- and C-terminal regions of the beta' subunit thereby facilitating its interaction with the beta and alpha subunits. The polypeptide is DNA-directed RNA polymerase subunit omega (rpoZ) (Treponema pallidum (strain Nichols)).